Consider the following 439-residue polypeptide: MGKPIVAIVGRPNVGKSTLFNKLAGKRIAIVQDTPGVTRDRIYAEAEWLNYKFTMIDTGGIEPESEDIIVSQMRRQAQIAIEMANVIIFLVDGKEGLAPADEEVAQMLRKSKKPVVLVVNKIDKLKDENNAYEFYNLGIGDPVTISSSQALGLGDMLDRVVEYFKDDELDGEEDERINIAFIGKPNVGKSSLINKLLGEERLIVSDIPGTTRDSIDSYVDTEFGEFTLIDTAGLRRKSKVKEEIERYSVIRTYASIERADVCILMIDATEGISEQDQKIIGYAHDINKAILVIVNKWDLVEKDDKTMDKFKKELKVNLSFMPYAKYLFISAKTGQRVVKVLQTAKECYDNYTKRVKTGVLNDVISQAIMMKEPPIVGTKRLKIYYVTQIGTKPPTFIFFVNDPACIHFSYQRYLENQLRENFDFQGTGIKLEFRERKEK.

EngA-type G domains are found at residues 4–168 (PIVA…KDDE) and 177–352 (INIA…DNYT). GTP-binding positions include 10-17 (GRPNVGKS), 57-61 (DTGGI), 120-123 (NKID), 183-190 (GKPNVGKS), 230-234 (DTAGL), and 295-298 (NKWD). The region spanning 353–437 (KRVKTGVLND…GIKLEFRERK (85 aa)) is the KH-like domain.

This sequence belongs to the TRAFAC class TrmE-Era-EngA-EngB-Septin-like GTPase superfamily. EngA (Der) GTPase family. Associates with the 50S ribosomal subunit.

In terms of biological role, GTPase that plays an essential role in the late steps of ribosome biogenesis. The chain is GTPase Der from Clostridium botulinum (strain Okra / Type B1).